Consider the following 259-residue polypeptide: HTH-type quorum sensing-dependent transcriptional regulator VjbR (259 aa).

Residues 76–179 (KNYFAIDPVF…AGIIHGTVCG (104 aa)) are C12-HSL binding. The 66-residue stretch at 183–248 (ANSVASLLTP…SAVATALSLG (66 aa)) folds into the HTH luxR-type domain. The H-T-H motif DNA-binding region spans 207–226 (DGEIAEILSIARWTVVTYLQ).

In terms of biological role, transcriptional regulator involved in the global control of Brucella gene expression. Mediates the effects of the quorum sensing autoinducer C12-HSL (N-dodecanoyl-homoserine lactone) on a large and diverse number of genes. The protein is HTH-type quorum sensing-dependent transcriptional regulator VjbR (vjbR) of Brucella ovis (strain ATCC 25840 / 63/290 / NCTC 10512).